A 146-amino-acid polypeptide reads, in one-letter code: D-aminoacyl-tRNA deacylase (146 aa).

The Gly-cisPro motif, important for rejection of L-amino acids signature appears at 137–138 (GP).

It belongs to the DTD family. Homodimer.

It localises to the cytoplasm. The catalysed reaction is glycyl-tRNA(Ala) + H2O = tRNA(Ala) + glycine + H(+). It carries out the reaction a D-aminoacyl-tRNA + H2O = a tRNA + a D-alpha-amino acid + H(+). Its function is as follows. An aminoacyl-tRNA editing enzyme that deacylates mischarged D-aminoacyl-tRNAs. Also deacylates mischarged glycyl-tRNA(Ala), protecting cells against glycine mischarging by AlaRS. Acts via tRNA-based rather than protein-based catalysis; rejects L-amino acids rather than detecting D-amino acids in the active site. By recycling D-aminoacyl-tRNA to D-amino acids and free tRNA molecules, this enzyme counteracts the toxicity associated with the formation of D-aminoacyl-tRNA entities in vivo and helps enforce protein L-homochirality. This Shouchella clausii (strain KSM-K16) (Alkalihalobacillus clausii) protein is D-aminoacyl-tRNA deacylase.